Reading from the N-terminus, the 662-residue chain is Interferon-induced GTP-binding protein Mx1 (662 aa).

N-acetylmethionine; in Interferon-induced GTP-binding protein Mx1; alternate is present on methionine 1. One can recognise a Dynamin-type G domain in the interval 67-340; that stretch reads DLALPAIAVI…LITHICKSLP (274 aa). Residues 77-84 are G1 motif; that stretch reads GDQSSGKS. Residue 77 to 84 coordinates GTP; the sequence is GDQSSGKS. The G2 motif stretch occupies residues 102–104; that stretch reads VTR. The G3 motif stretch occupies residues 178 to 181; it reads DLPG. GTP is bound by residues 178–182 and 247–250; these read DLPGI and TKPD. The segment at 247–250 is G4 motif; it reads TKPD. Residues 279 to 282 are G5 motif; it reads KCRG. The bundle signaling element (BSE) stretch occupies residues 341-366; that stretch reads LLENQIKETHQRITEELQKYGVDIPE. The tract at residues 366-533 is middle domain; that stretch reads EDENEKMFFL…HFQMEQIVYC (168 aa). Positions 367 to 632 are stalk; that stretch reads DENEKMFFLI…KDTYSWLLKE (266 aa). The tract at residues 554–557 is critical for lipid-binding; the sequence is KKKK. Residues 574–662 enclose the GED domain; that stretch reads MEEIFQHLMA…ARRRLAQFPG (89 aa).

Belongs to the TRAFAC class dynamin-like GTPase superfamily. Dynamin/Fzo/YdjA family. As to quaternary structure, homotetramer. Oligomerizes into multimeric filamentous or ring-like structures by virtue of its stalk domain. Oligomerization is critical for GTPase activity, protein stability, and recognition of viral target structures. Interacts with TRPC1, TRPC3, TRPC4, TRPC5, TRPC6 and TRPC7. Interacts with HSPA5. Interacts with DDX39A and DDX39B. Interacts with TUBB/TUBB5. The GTP-bound form interacts (via C-terminus) with THOV P5 protein. The GTP-bound form interacts with LACV protein N. Interacts with CCHFV protein N. Post-translationally, ISGylated.

The protein localises to the cytoplasm. It localises to the endoplasmic reticulum membrane. It is found in the perinuclear region. The protein resides in the nucleus. Interferon-induced dynamin-like GTPase with antiviral activity against a wide range of RNA viruses and some DNA viruses. Its target viruses include negative-stranded RNA viruses and HBV through binding and inactivation of their ribonucleocapsid. May also antagonize reoviridae and asfarviridae replication. Inhibits thogoto virus (THOV) replication by preventing the nuclear import of viral nucleocapsids. Inhibits La Crosse virus (LACV) replication by sequestering viral nucleoprotein in perinuclear complexes, preventing genome amplification, budding, and egress. Inhibits influenza A virus (IAV) replication by decreasing or delaying NP synthesis and by blocking endocytic traffic of incoming virus particles. Enhances ER stress-mediated cell death after influenza virus infection. May regulate the calcium channel activity of TRPCs. The chain is Interferon-induced GTP-binding protein Mx1 (MX1) from Homo sapiens (Human).